Consider the following 338-residue polypeptide: Ketol-acid reductoisomerase (NADP(+)) (338 aa).

One can recognise a KARI N-terminal Rossmann domain in the interval 1 to 181 (MNVFYDKDAD…GGGRAGIIET (181 aa)). NADP(+) contacts are provided by residues 24-27 (YGSQ), Arg47, and Ser52. His107 is a catalytic residue. Gly133 contributes to the NADP(+) binding site. A KARI C-terminal knotted domain is found at 182-327 (NFREETETDL…AKLRAMMPWI (146 aa)). Residues Asp190, Glu194, Glu226, and Glu230 each coordinate Mg(2+). Ser251 contributes to the substrate binding site.

The protein belongs to the ketol-acid reductoisomerase family. Mg(2+) is required as a cofactor.

The enzyme catalyses (2R)-2,3-dihydroxy-3-methylbutanoate + NADP(+) = (2S)-2-acetolactate + NADPH + H(+). It carries out the reaction (2R,3R)-2,3-dihydroxy-3-methylpentanoate + NADP(+) = (S)-2-ethyl-2-hydroxy-3-oxobutanoate + NADPH + H(+). The protein operates within amino-acid biosynthesis; L-isoleucine biosynthesis; L-isoleucine from 2-oxobutanoate: step 2/4. It participates in amino-acid biosynthesis; L-valine biosynthesis; L-valine from pyruvate: step 2/4. Involved in the biosynthesis of branched-chain amino acids (BCAA). Catalyzes an alkyl-migration followed by a ketol-acid reduction of (S)-2-acetolactate (S2AL) to yield (R)-2,3-dihydroxy-isovalerate. In the isomerase reaction, S2AL is rearranged via a Mg-dependent methyl migration to produce 3-hydroxy-3-methyl-2-ketobutyrate (HMKB). In the reductase reaction, this 2-ketoacid undergoes a metal-dependent reduction by NADPH to yield (R)-2,3-dihydroxy-isovalerate. This Burkholderia cenocepacia (strain ATCC BAA-245 / DSM 16553 / LMG 16656 / NCTC 13227 / J2315 / CF5610) (Burkholderia cepacia (strain J2315)) protein is Ketol-acid reductoisomerase (NADP(+)).